Reading from the N-terminus, the 613-residue chain is Chaperone protein DnaK (613 aa).

The segment at 578–613 is disordered; sequence MYQSQATQGTSQNSSQNNNSQNNNGDTVDADFKESK. Residues 580–602 are compositionally biased toward low complexity; that stretch reads QSQATQGTSQNSSQNNNSQNNNG.

This sequence belongs to the heat shock protein 70 family.

Acts as a chaperone. This is Chaperone protein DnaK from Picrophilus torridus (strain ATCC 700027 / DSM 9790 / JCM 10055 / NBRC 100828 / KAW 2/3).